Consider the following 221-residue polypeptide: Carbonic anhydrase (221 aa).

4 residues coordinate Zn(2+): cysteine 38, aspartate 40, histidine 99, and cysteine 102.

The protein belongs to the beta-class carbonic anhydrase family. The cofactor is Zn(2+).

It carries out the reaction hydrogencarbonate + H(+) = CO2 + H2O. This chain is Carbonic anhydrase (cynT), found in Helicobacter pylori (strain J99 / ATCC 700824) (Campylobacter pylori J99).